The sequence spans 190 residues: Potassium-transporting ATPase KdpC subunit (190 aa).

A helical transmembrane segment spans residues 10–30 (TFLFLLLITGGVYPLLTTALG).

It belongs to the KdpC family. As to quaternary structure, the system is composed of three essential subunits: KdpA, KdpB and KdpC.

The protein localises to the cell inner membrane. Part of the high-affinity ATP-driven potassium transport (or Kdp) system, which catalyzes the hydrolysis of ATP coupled with the electrogenic transport of potassium into the cytoplasm. This subunit acts as a catalytic chaperone that increases the ATP-binding affinity of the ATP-hydrolyzing subunit KdpB by the formation of a transient KdpB/KdpC/ATP ternary complex. This chain is Potassium-transporting ATPase KdpC subunit, found in Escherichia coli O127:H6 (strain E2348/69 / EPEC).